A 213-amino-acid polypeptide reads, in one-letter code: Ribosomal RNA small subunit methyltransferase G (213 aa).

S-adenosyl-L-methionine-binding positions include G75, F80, I128–E129, and R144.

It belongs to the methyltransferase superfamily. RNA methyltransferase RsmG family.

Its subcellular location is the cytoplasm. The enzyme catalyses guanosine(527) in 16S rRNA + S-adenosyl-L-methionine = N(7)-methylguanosine(527) in 16S rRNA + S-adenosyl-L-homocysteine. In terms of biological role, specifically methylates the N7 position of guanine in position 527 of 16S rRNA. This chain is Ribosomal RNA small subunit methyltransferase G, found in Brucella anthropi (strain ATCC 49188 / DSM 6882 / CCUG 24695 / JCM 21032 / LMG 3331 / NBRC 15819 / NCTC 12168 / Alc 37) (Ochrobactrum anthropi).